Reading from the N-terminus, the 243-residue chain is Sugar fermentation stimulation protein homolog (243 aa).

The protein belongs to the SfsA family.

The protein is Sugar fermentation stimulation protein homolog of Acaryochloris marina (strain MBIC 11017).